Consider the following 312-residue polypeptide: 3-methyl-2-oxobutanoate hydroxymethyltransferase (312 aa).

Belongs to the PanB family.

It carries out the reaction 3-methyl-2-oxobutanoate + (6R)-5,10-methylene-5,6,7,8-tetrahydrofolate + H2O = 2-dehydropantoate + (6S)-5,6,7,8-tetrahydrofolate. The protein operates within cofactor biosynthesis; (R)-pantothenate biosynthesis; (R)-pantoate from 3-methyl-2-oxobutanoate: step 1/2. Its function is as follows. Probable 3-methyl-2-oxobutanoate hydroxymethyltransferase required for pantothenic acid biosynthesis. Acts downstream in the pantothenic acid pathway. This chain is 3-methyl-2-oxobutanoate hydroxymethyltransferase, found in Saccharomyces cerevisiae (strain ATCC 204508 / S288c) (Baker's yeast).